Here is a 142-residue protein sequence, read N- to C-terminus: Hemoglobin subunit alpha-B (142 aa).

The 141-residue stretch at P2 to R142 folds into the Globin domain. An O2-binding site is contributed by Q59. Position 88 (H88) interacts with heme b.

Belongs to the globin family. As to quaternary structure, heterotetramer of either two alpha-B chains or two alpha-C chains and two beta chains. The two major hemoglobins, B and C, associate upon deoxygenation to form a trimer of tetramers, BC2, that has a much lower affinity for oxygen than either component alone. In terms of tissue distribution, red blood cells.

Its function is as follows. The alpha-B chain is a component of adult hemoglobin B. This chain is Hemoglobin subunit alpha-B, found in Aquarana catesbeiana (American bullfrog).